The following is a 147-amino-acid chain: D-aminoacyl-tRNA deacylase (147 aa).

The Gly-cisPro motif, important for rejection of L-amino acids signature appears at Gly136–Pro137.

Belongs to the DTD family. As to quaternary structure, homodimer.

The protein localises to the cytoplasm. The enzyme catalyses glycyl-tRNA(Ala) + H2O = tRNA(Ala) + glycine + H(+). It catalyses the reaction a D-aminoacyl-tRNA + H2O = a tRNA + a D-alpha-amino acid + H(+). Functionally, an aminoacyl-tRNA editing enzyme that deacylates mischarged D-aminoacyl-tRNAs. Also deacylates mischarged glycyl-tRNA(Ala), protecting cells against glycine mischarging by AlaRS. Acts via tRNA-based rather than protein-based catalysis; rejects L-amino acids rather than detecting D-amino acids in the active site. By recycling D-aminoacyl-tRNA to D-amino acids and free tRNA molecules, this enzyme counteracts the toxicity associated with the formation of D-aminoacyl-tRNA entities in vivo and helps enforce protein L-homochirality. The polypeptide is D-aminoacyl-tRNA deacylase (Streptococcus equi subsp. zooepidemicus (strain H70)).